A 2039-amino-acid chain; its full sequence is PHD finger protein 3 (2039 aa).

Residues Ser-97 and Ser-125 each carry the phosphoserine modification. Positions 144 to 168 are enriched in polar residues; sequence STIAKRSNAAPLSNTKKASGKTVST. The interval 144 to 178 is disordered; that stretch reads STIAKRSNAAPLSNTKKASGKTVSTAKAGVKQPER. Ser-283 and Ser-299 each carry phosphoserine. Residues 460 to 472 show a composition bias toward basic and acidic residues; sequence ESHETANLQDDRN. Disordered stretches follow at residues 460-492, 528-555, and 596-685; these read ESHETANLQDDRNSQSSSVSYLESKSVKSKHTK, VKRNTDVPESQQNFHRPVKVRKKQIDKE, and LSDK…SLDE. Residues 473-483 are compositionally biased toward low complexity; it reads SQSSSVSYLES. The segment covering 596–612 has biased composition (basic and acidic residues); it reads LSDKSHAHPGCLKEPHH. Residues 617-640 show a composition bias toward polar residues; sequence GHVSHSSQKQCHKPQQQAPAMKTN. Positions 642-670 are enriched in basic and acidic residues; sequence HVKEELEHPGVEHFKEEDKLKLKKPEKNL. Lys-644 participates in a covalent cross-link: Glycyl lysine isopeptide (Lys-Gly) (interchain with G-Cter in SUMO2). Residue Ser-680 is modified to Phosphoserine. The segment at 717–772 adopts a PHD-type zinc-finger fold; the sequence is SKQCGFCKKPHGNRFMVGCGRCDDWFHGDCVGLSLSQAQQMGEEDKEYVCVKCCAE. Positions 860-904 are disordered; it reads GQPVLPRRSSEEKSEKIPKESTTVTCTGEKASKPGTHEKQEMKKK. Basic and acidic residues-rich tracts occupy residues 867–878 and 889–900; these read RSSEEKSEKIPK and KASKPGTHEKQE. In terms of domain architecture, TFIIS central spans 927-1046; sequence IRQSVRHSLK…MIEKEQREVE (120 aa). Lys-964 is covalently cross-linked (Glycyl lysine isopeptide (Lys-Gly) (interchain with G-Cter in SUMO2)). Phosphoserine is present on Ser-1014. The disordered stretch occupies residues 1078–1109; that stretch reads EPAANKSLEKPEGSEKQKEEVDSMSKDTTSQH. Positions 1084 to 1102 are enriched in basic and acidic residues; it reads SLEKPEGSEKQKEEVDSMS. Ser-1133, Ser-1148, and Ser-1178 each carry phosphoserine. Disordered stretches follow at residues 1171–1191, 1360–1380, and 1581–1623; these read FEEEKQESPKSTFSPAPRPEM, STSHIAETPESAPPIALPPDK, and KQEE…VGKG. Residues 1581–1598 are compositionally biased toward basic and acidic residues; the sequence is KQEETVESKEKTLKRQLQ. 2 positions are modified to phosphoserine: Ser-1614 and Ser-1642. Disordered regions lie at residues 1643 to 1684 and 1776 to 1800; these read PQFI…LPGL and PSKSITFTSRSTSPRTSTNFSPMRP. Residues 1666 to 1684 show a composition bias toward basic and acidic residues; sequence ESKDGDSCRNGEKHMLPGL. A compositionally biased stretch (low complexity) spans 1781-1797; it reads TFTSRSTSPRTSTNFSP. Arg-1867 and Arg-1877 each carry asymmetric dimethylarginine. The interval 1884–2039 is disordered; the sequence is FYQVKDIRRP…DHTDRTKSKR (156 aa). Composition is skewed to basic and acidic residues over residues 1888–1902 and 1912–2039; these read KDIRRPERRHSDPWG and PFNR…KSKR. 2 positions are modified to phosphoserine: Ser-1898 and Ser-1925. Lys-1931 is covalently cross-linked (Glycyl lysine isopeptide (Lys-Gly) (interchain with G-Cter in SUMO2)).

Ubiquitous. Expression is significantly reduced or lost in glioblastomas, glioblastoma cell lines, anaplastic astrocytomas, and astrocytomas.

This is PHD finger protein 3 (PHF3) from Homo sapiens (Human).